Reading from the N-terminus, the 116-residue chain is Large ribosomal subunit protein bL20 (116 aa).

This sequence belongs to the bacterial ribosomal protein bL20 family.

Binds directly to 23S ribosomal RNA and is necessary for the in vitro assembly process of the 50S ribosomal subunit. It is not involved in the protein synthesizing functions of that subunit. The protein is Large ribosomal subunit protein bL20 of Bacteroides fragilis (strain ATCC 25285 / DSM 2151 / CCUG 4856 / JCM 11019 / LMG 10263 / NCTC 9343 / Onslow / VPI 2553 / EN-2).